We begin with the raw amino-acid sequence, 289 residues long: Serine/threonine-protein phosphatase Pgam5, mitochondrial (289 aa).

Residues Leu-7–Leu-23 traverse the membrane as a helical segment.

It belongs to the phosphoglycerate mutase family. BPG-dependent PGAM subfamily. Interacts with Pk92B/ASK1.

The protein resides in the mitochondrion outer membrane. The enzyme catalyses O-phospho-L-seryl-[protein] + H2O = L-seryl-[protein] + phosphate. The catalysed reaction is O-phospho-L-threonyl-[protein] + H2O = L-threonyl-[protein] + phosphate. Functionally, displays phosphatase activity for serine/threonine residues, and dephosphorylates and activates Pk92B kinase. Has apparently no phosphoglycerate mutase activity. The chain is Serine/threonine-protein phosphatase Pgam5, mitochondrial from Drosophila ananassae (Fruit fly).